Here is a 95-residue protein sequence, read N- to C-terminus: Small ribosomal subunit protein bS20 (95 aa).

This sequence belongs to the bacterial ribosomal protein bS20 family.

Functionally, binds directly to 16S ribosomal RNA. This is Small ribosomal subunit protein bS20 from Ehrlichia canis (strain Jake).